A 148-amino-acid polypeptide reads, in one-letter code: Large ribosomal subunit protein bL9 (148 aa).

Belongs to the bacterial ribosomal protein bL9 family.

Functionally, binds to the 23S rRNA. The chain is Large ribosomal subunit protein bL9 from Frankia casuarinae (strain DSM 45818 / CECT 9043 / HFP020203 / CcI3).